Consider the following 764-residue polypeptide: 5-methyltetrahydropteroyltriglutamate--homocysteine methyltransferase (764 aa).

5-methyltetrahydropteroyltri-L-glutamate-binding positions include 19–22 (RELK) and K113. L-homocysteine is bound by residues 435–437 (IGS) and E488. Residues 435 to 437 (IGS) and E488 each bind L-methionine. Residues 519–520 (RC) and W565 contribute to the 5-methyltetrahydropteroyltri-L-glutamate site. D603 provides a ligand contact to L-homocysteine. L-methionine is bound at residue D603. Position 609 (E609) interacts with 5-methyltetrahydropteroyltri-L-glutamate. Zn(2+) contacts are provided by H645, C647, and E669. Catalysis depends on H698, which acts as the Proton donor. Residue C730 coordinates Zn(2+).

Belongs to the vitamin-B12 independent methionine synthase family. Zn(2+) serves as cofactor.

It carries out the reaction 5-methyltetrahydropteroyltri-L-glutamate + L-homocysteine = tetrahydropteroyltri-L-glutamate + L-methionine. The protein operates within amino-acid biosynthesis; L-methionine biosynthesis via de novo pathway; L-methionine from L-homocysteine (MetE route): step 1/1. Functionally, catalyzes the transfer of a methyl group from 5-methyltetrahydrofolate to homocysteine resulting in methionine formation. The protein is 5-methyltetrahydropteroyltriglutamate--homocysteine methyltransferase of Desulforamulus reducens (strain ATCC BAA-1160 / DSM 100696 / MI-1) (Desulfotomaculum reducens).